A 244-amino-acid chain; its full sequence is Nonsense-mediated decay protein 4 (244 aa).

It is found in the cytoplasm. Functionally, involved in nonsense-mediated decay of mRNAs containing premature stop codons. This is Nonsense-mediated decay protein 4 (NMD4) from Kluyveromyces lactis (strain ATCC 8585 / CBS 2359 / DSM 70799 / NBRC 1267 / NRRL Y-1140 / WM37) (Yeast).